The sequence spans 176 residues: Nucleoside triphosphate/diphosphate phosphatase (176 aa).

Arg23 functions as the Proton donor in the catalytic mechanism. Mg(2+)-binding residues include Asn87, Asp103, Asp105, Asp107, Asp120, and Glu123.

Belongs to the Ntdp family. It depends on Mg(2+) as a cofactor.

It carries out the reaction a ribonucleoside 5'-triphosphate + H2O = a ribonucleoside 5'-diphosphate + phosphate + H(+). The enzyme catalyses a ribonucleoside 5'-diphosphate + H2O = a ribonucleoside 5'-phosphate + phosphate + H(+). In terms of biological role, has nucleoside phosphatase activity towards nucleoside triphosphates and nucleoside diphosphates. The protein is Nucleoside triphosphate/diphosphate phosphatase of Bacillus cereus (strain AH820).